The chain runs to 283 residues: 4-diphosphocytidyl-2-C-methyl-D-erythritol kinase (283 aa).

Residue Lys10 is part of the active site. 94-104 (PVAAGLAGGSS) serves as a coordination point for ATP. The active site involves Asp136.

It belongs to the GHMP kinase family. IspE subfamily.

The enzyme catalyses 4-CDP-2-C-methyl-D-erythritol + ATP = 4-CDP-2-C-methyl-D-erythritol 2-phosphate + ADP + H(+). The protein operates within isoprenoid biosynthesis; isopentenyl diphosphate biosynthesis via DXP pathway; isopentenyl diphosphate from 1-deoxy-D-xylulose 5-phosphate: step 3/6. Its function is as follows. Catalyzes the phosphorylation of the position 2 hydroxy group of 4-diphosphocytidyl-2C-methyl-D-erythritol. The polypeptide is 4-diphosphocytidyl-2-C-methyl-D-erythritol kinase (Enterococcus faecalis (strain ATCC 700802 / V583)).